The sequence spans 132 residues: Large ribosomal subunit protein bL21 (132 aa).

A disordered region spans residues 112–132; the sequence is AEKPARKPRAKKTNEVTTDGA.

The protein belongs to the bacterial ribosomal protein bL21 family. Part of the 50S ribosomal subunit. Contacts protein L20.

Its function is as follows. This protein binds to 23S rRNA in the presence of protein L20. The chain is Large ribosomal subunit protein bL21 from Dehalococcoides mccartyi (strain ATCC BAA-2266 / KCTC 15142 / 195) (Dehalococcoides ethenogenes (strain 195)).